We begin with the raw amino-acid sequence, 283 residues long: 4-diphosphocytidyl-2-C-methyl-D-erythritol kinase (283 aa).

The active site involves Lys-10. 99–109 (PMGGGLGGGSS) contributes to the ATP binding site. The active site involves Asp-141.

This sequence belongs to the GHMP kinase family. IspE subfamily. Homodimer.

The catalysed reaction is 4-CDP-2-C-methyl-D-erythritol + ATP = 4-CDP-2-C-methyl-D-erythritol 2-phosphate + ADP + H(+). Its pathway is isoprenoid biosynthesis; isopentenyl diphosphate biosynthesis via DXP pathway; isopentenyl diphosphate from 1-deoxy-D-xylulose 5-phosphate: step 3/6. In terms of biological role, catalyzes the phosphorylation of the position 2 hydroxy group of 4-diphosphocytidyl-2C-methyl-D-erythritol. This chain is 4-diphosphocytidyl-2-C-methyl-D-erythritol kinase, found in Escherichia coli O9:H4 (strain HS).